A 328-amino-acid chain; its full sequence is MPQSASVDDHGAQAPHPQIAAYLDALKFERQLSPHTLQSYTRELAVLQRLGAQHAANIDLTQLQSHHIRRMMAQLHGDGLSGRSIARALSAWRGWFKWMALRDAAVTANPVDGVRAPKSPKRLPKALSVEQAVALMEQLPGDDAETIRDRAVNELFYSCGLRLSELVSLDMRHVKAGAYESASWLDLEAREVQVLGKGSKRRTVPVGTKATEALAAWLAVRAQLAKSDAAPEDAHALFLSPRGKRLAQRQIQLRMKRNAIAAGVPADVHPHVLRHSFATHMLQSSGDLRAVQELLGHASIASTQVYTSLDFQHLAKIYDQAHPRAKKK.

A Core-binding (CB) domain is found at 13–100 (QAPHPQIAAY…AWRGWFKWMA (88 aa)). The 198-residue stretch at 122-319 (RLPKALSVEQ…DFQHLAKIYD (198 aa)) folds into the Tyr recombinase domain. Catalysis depends on residues Arg162, Lys197, His271, Arg274, and His297. The O-(3'-phospho-DNA)-tyrosine intermediate role is filled by Tyr306.

It belongs to the 'phage' integrase family. XerC subfamily. Forms a cyclic heterotetrameric complex composed of two molecules of XerC and two molecules of XerD.

Its subcellular location is the cytoplasm. Its function is as follows. Site-specific tyrosine recombinase, which acts by catalyzing the cutting and rejoining of the recombining DNA molecules. The XerC-XerD complex is essential to convert dimers of the bacterial chromosome into monomers to permit their segregation at cell division. It also contributes to the segregational stability of plasmids. The sequence is that of Tyrosine recombinase XerC from Ralstonia pickettii (strain 12J).